The primary structure comprises 356 residues: Ion-translocating oxidoreductase complex subunit D (356 aa).

The next 4 helical transmembrane spans lie at 20-40, 42-62, 68-88, and 117-137; these read LMLL…WFFG, GVLV…ALAI, PVGF…IGVS, and GFNP…SFPV. Thr-177 carries the post-translational modification FMN phosphoryl threonine. A run of 5 helical transmembrane segments spans residues 205-225, 229-249, 259-279, 292-312, and 315-335; these read WASA…LYLL, VYTW…AALF, GSPL…FIVT, VIYG…GSSY, and GVAF…YYTT.

Belongs to the NqrB/RnfD family. As to quaternary structure, the complex is composed of six subunits: RnfA, RnfB, RnfC, RnfD, RnfE and RnfG. FMN is required as a cofactor.

It localises to the cell inner membrane. In terms of biological role, part of a membrane-bound complex that couples electron transfer with translocation of ions across the membrane. The protein is Ion-translocating oxidoreductase complex subunit D of Cellvibrio japonicus (strain Ueda107) (Pseudomonas fluorescens subsp. cellulosa).